A 703-amino-acid chain; its full sequence is Protein teflon (703 aa).

Residues 32–55 form a C2H2-type 1 zinc finger; the sequence is MFCHFCKDIFTHLPEFMRHLQWSH. Disordered stretches follow at residues 78–111, 138–161, and 339–434; these read TSED…PGSS, SHEQ…ARKP, and SQQP…SKLE. Composition is skewed to polar residues over residues 84–94 and 138–147; these read QSQANSCSSGD and SHEQSYSKTP. A compositionally biased stretch (basic and acidic residues) spans 148 to 161; sequence PDSRTEGFRCARKP. 2 stretches are compositionally biased toward polar residues: residues 339 to 352 and 364 to 373; these read SQQP…NNAV and SLTVISSSPI. 2 consecutive C2H2-type zinc fingers follow at residues 649-672 and 677-700; these read YFCE…QSVH and FTCS…KTVH.

The protein belongs to the Teflon family.

The protein localises to the nucleus. It is found in the chromosome. Specifically required in males for proper segregation of autosomal bivalents at meiosis I. Expression is required in the male germ line prior to spermatocyte stage S4. May have a role as a bridging molecule maintaining adhesion to hold autosome bivalents together via heterochromatic connections. The polypeptide is Protein teflon (Drosophila pseudoobscura pseudoobscura (Fruit fly)).